A 535-amino-acid chain; its full sequence is Probable monogalactosyldiacylglycerol synthase, chloroplastic (535 aa).

The transit peptide at 1–113 (MMQHSSSVTQ…KIPLGFASVG (113 aa)) directs the protein to the chloroplast.

This sequence belongs to the glycosyltransferase 28 family.

It is found in the plastid. Its subcellular location is the chloroplast membrane. It carries out the reaction a 1,2-diacyl-sn-glycerol + UDP-alpha-D-galactose = a 1,2-diacyl-3-O-(beta-D-galactosyl)-sn-glycerol + UDP + H(+). Functionally, involved in the synthesis of the major structural component of photosynthetic membranes. This Nicotiana tabacum (Common tobacco) protein is Probable monogalactosyldiacylglycerol synthase, chloroplastic (MGD A).